The chain runs to 210 residues: Outer-membrane lipoprotein LolB (210 aa).

An N-terminal signal peptide occupies residues 1-18 (MKKFTKILSLSTLLFLAG). C19 carries N-palmitoyl cysteine lipidation. Residue C19 is the site of S-diacylglycerol cysteine attachment.

This sequence belongs to the LolB family. As to quaternary structure, monomer.

It localises to the cell outer membrane. Plays a critical role in the incorporation of lipoproteins in the outer membrane after they are released by the LolA protein. This Actinobacillus pleuropneumoniae serotype 5b (strain L20) protein is Outer-membrane lipoprotein LolB.